A 403-amino-acid chain; its full sequence is Forkhead box protein Q1 (403 aa).

Disordered stretches follow at residues 1-75 (MKLE…PGAE) and 94-116 (GAAG…PYTR). Over residues 32–48 (LSAAGDDSLGSDGDCAA) the composition is skewed to low complexity. Gly residues predominate over residues 96–107 (AGPGAGGAGSGE). Positions 119-214 (KPPYSYIALI…ADGVFRRRRK (96 aa)) form a DNA-binding region, fork-head. The disordered stretch occupies residues 216 to 266 (LSHRAPVPAPGLRPEEAPGLPAAPPPAPAAPASPRMRSPARQEERASPAGK). Residues 236-246 (PAAPPPAPAAP) are compositionally biased toward pro residues.

In terms of tissue distribution, expressed predominantly in the stomach, trachea, bladder and salivary gland.

It localises to the nucleus. Functionally, plays a role in hair follicle differentiation. The chain is Forkhead box protein Q1 (FOXQ1) from Homo sapiens (Human).